Here is a 246-residue protein sequence, read N- to C-terminus: Bis(5'-nucleosyl)-tetraphosphatase PrpE [asymmetrical] (246 aa).

It belongs to the PrpE family. Ni(2+) is required as a cofactor.

It carries out the reaction P(1),P(4)-bis(5'-guanosyl) tetraphosphate + H2O = GMP + GTP + 2 H(+). Asymmetrically hydrolyzes Ap4p to yield AMP and ATP. In Bacillus cereus (strain ZK / E33L), this protein is Bis(5'-nucleosyl)-tetraphosphatase PrpE [asymmetrical].